The following is a 668-amino-acid chain: Eukaryotic translation initiation factor 3 subunit L (668 aa).

The span at 1-17 (MVADASQQGQSNGAAFN) shows a compositional bias: polar residues. The interval 1 to 42 (MVADASQQGQSNGAAFNQQQQYQQQQQRQLFGGEEEFGDEEE) is disordered. The span at 18–32 (QQQQYQQQQQRQLFG) shows a compositional bias: low complexity. The segment covering 33–42 (GEEEFGDEEE) has biased composition (acidic residues). In terms of domain architecture, PCI spans 358–552 (SFTHILVFIM…QVVNTSDLDF (195 aa)). The interval 625–668 (AGVKAGPPAFSQRSGGAGRSSVNKSAPAPAGAWGSSKPQPSVTA) is disordered. The span at 648–662 (KSAPAPAGAWGSSKP) shows a compositional bias: low complexity.

It belongs to the eIF-3 subunit L family. Component of the eukaryotic translation initiation factor 3 (eIF-3) complex.

The protein localises to the cytoplasm. Its function is as follows. Component of the eukaryotic translation initiation factor 3 (eIF-3) complex, which is involved in protein synthesis of a specialized repertoire of mRNAs and, together with other initiation factors, stimulates binding of mRNA and methionyl-tRNAi to the 40S ribosome. The eIF-3 complex specifically targets and initiates translation of a subset of mRNAs involved in cell proliferation. The polypeptide is Eukaryotic translation initiation factor 3 subunit L (Mycosarcoma maydis (Corn smut fungus)).